Reading from the N-terminus, the 888-residue chain is Protein translocase subunit SecA (888 aa).

Residues Q81, 99–103, and D489 contribute to the ATP site; that span reads GEGKT.

The protein belongs to the SecA family.

The protein resides in the plastid. It is found in the chloroplast stroma. It localises to the chloroplast thylakoid membrane. The catalysed reaction is ATP + H2O + cellular proteinSide 1 = ADP + phosphate + cellular proteinSide 2.. Its function is as follows. Has a central role in coupling the hydrolysis of ATP to the transfer of proteins across the thylakoid membrane. The sequence is that of Protein translocase subunit SecA from Trieres chinensis (Marine centric diatom).